A 352-amino-acid polypeptide reads, in one-letter code: Rhodopsin (352 aa).

Over 1–36 (MNGTEGPDFYIPFSNKTGVVRSPFEYPQYYLAEPWK) the chain is Extracellular. N-linked (GlcNAc...) asparagine glycans are attached at residues asparagine 2 and asparagine 15. A helical membrane pass occupies residues 37-61 (YSALAAYMFMLIILGFPINFLTLYV). At 62-73 (TVQHKKLRSPLN) the chain is on the cytoplasmic side. A helical transmembrane segment spans residues 74–96 (YILLNLAVADLFMVLGGFTTTLY). At 97–110 (TSMNGYFVFGVTGC) the chain is on the extracellular side. A disulfide bridge connects residues cysteine 110 and cysteine 187. The chain crosses the membrane as a helical span at residues 111–133 (YFEGFFATLGGEVALWCLVVLAI). Residues 134 to 136 (ERY) carry the 'Ionic lock' involved in activated form stabilization motif. Over 134–152 (ERYIVVCKPMSNFRFGENH) the chain is Cytoplasmic. The helical transmembrane segment at 153–173 (AIMGVVFTWIMALTCAAPPLV) threads the bilayer. The Extracellular segment spans residues 174–202 (GWSRYIPEGMQCSCGVDYYTLKPEVNNES). A helical membrane pass occupies residues 203-224 (FVIYMFVVHFAIPLAVIFFCYG). Over 225-252 (RLVCTVKEAAAQQQESATTQKAEKEVTR) the chain is Cytoplasmic. The chain crosses the membrane as a helical span at residues 253–274 (MVIIMVVSFLICWVPYASVAFY). At 275-286 (IFSNQGSDFGPV) the chain is on the extracellular side. Residues 287–308 (FMTIPAFFAKSSAIYNPVIYIV) traverse the membrane as a helical segment. Lysine 296 bears the N6-(retinylidene)lysine mark. At 309-352 (MNKQFRNCMITTLCCGKNPLGDDETATGSKTETSSVSTSQVSPA) the chain is on the cytoplasmic side. 2 S-palmitoyl cysteine lipidation sites follow: cysteine 322 and cysteine 323. The interval 332–352 (ETATGSKTETSSVSTSQVSPA) is disordered. Residues 335 to 352 (TGSKTETSSVSTSQVSPA) are compositionally biased toward low complexity.

It belongs to the G-protein coupled receptor 1 family. Opsin subfamily. Contains one covalently linked retinal chromophore. Upon light absorption, the covalently bound 11-cis-retinal is converted to all-trans-retinal. After hydrolysis of the Schiff base and release of the covalently bound all-trans-retinal, active rhodopsin is regenerated by binding of a fresh molecule of 11-cis-retinal. In terms of tissue distribution, expressed in rod-shaped photoreceptor cells in the retina that mediate vision in dim ligh (at protein level).

The protein resides in the membrane. The protein localises to the cell projection. Its subcellular location is the cilium. It is found in the photoreceptor outer segment. Its function is as follows. Photoreceptor required for image-forming vision at low light intensity. Required for photoreceptor cell viability after birth. Light-induced isomerization of 11-cis to all-trans retinal triggers a conformational change that activates signaling via G-proteins. Subsequent receptor phosphorylation mediates displacement of the bound G-protein alpha subunit by arrestin and terminates signaling. In Alligator mississippiensis (American alligator), this protein is Rhodopsin (RHO).